Reading from the N-terminus, the 373-residue chain is Ferroptosis suppressor protein 1 (373 aa).

The N-myristoyl glycine moiety is linked to residue G2. A helical membrane pass occupies residues 13–29 (VVVVGGGFGGTAAASLL). 6-hydroxy-FAD contacts are provided by residues 17 to 21 (GGGFG), R53, and V81. An N6-acetyllysine modification is found at K167. D284 is a 6-hydroxy-FAD binding site.

Belongs to the FAD-dependent oxidoreductase family. 6-hydroxy-FAD is required as a cofactor. In terms of processing, N-myristoylation at Gly-2 mediates the recruitment to lipid droplets and plasma membrane. Post-translationally, acetylation at Lys-167 prevents AIFM2 ubiquitination and degradation, thereby inhibiting ferroptosis. KAT2B mediates acetylation at Lys-167, while HDAC3 removes it. Ubiquitinated. AIFM2 undergoes 'Lys-29'-ubiquitination and proteasomal degradation, which is inhibited by acetylation at Lys-167.

The protein resides in the lipid droplet. Its subcellular location is the cell membrane. The protein localises to the cytoplasm. It localises to the mitochondrion membrane. It is found in the nucleus. The catalysed reaction is ubiquinone-10 + NADH + H(+) = ubiquinol-10 + NAD(+). The enzyme catalyses phylloquinone + NADH + H(+) = phylloquinol + NAD(+). It carries out the reaction menaquinone-4 + NADH + H(+) = menaquinol-4 + NAD(+). It catalyses the reaction menadione + NADH + H(+) = menadiol + NAD(+). The modification by 4-hydroxy-2-nonenal (HNE) adduction in mitochondria results in loss of the oxidoreductase activity and activation of a novel function in mitochondrial oxidative stress signaling. In terms of biological role, a NAD(P)H-dependent oxidoreductase that acts as a key inhibitor of ferroptosis. At the plasma membrane, catalyzes reduction of coenzyme Q/ubiquinone-10 to ubiquinol-10, a lipophilic radical-trapping antioxidant that prevents lipid oxidative damage and consequently ferroptosis. Acts in parallel to GPX4 to suppress phospholipid peroxidation and ferroptosis. This anti-ferroptotic function is independent of cellular glutathione levels. Also acts as a potent radical-trapping antioxidant by mediating warfarin-resistant vitamin K reduction in the canonical vitamin K cycle: catalyzes NAD(P)H-dependent reduction of vitamin K (phylloquinone, menaquinone-4 and menadione) to hydroquinone forms. Hydroquinones act as potent radical-trapping antioxidants inhibitor of phospholipid peroxidation and ferroptosis. May play a role in mitochondrial stress signaling. Upon oxidative stress, associates with the lipid peroxidation end product 4-hydroxy-2-nonenal (HNE) forming a lipid adduct devoid of oxidoreductase activity, which then translocates from mitochondria into the nucleus triggering DNA damage and cell death. The chain is Ferroptosis suppressor protein 1 (AIFM2) from Taeniopygia guttata (Zebra finch).